The primary structure comprises 126 residues: Glycine cleavage system H protein (126 aa).

The Lipoyl-binding domain occupies 22 to 104; it reads TVTIGITEYA…YEKAWMVKVK (83 aa). At Lys-63 the chain carries N6-lipoyllysine.

It belongs to the GcvH family. As to quaternary structure, the glycine cleavage system is composed of four proteins: P, T, L and H. It depends on (R)-lipoate as a cofactor.

The glycine cleavage system catalyzes the degradation of glycine. The H protein shuttles the methylamine group of glycine from the P protein to the T protein. Functionally, is also involved in protein lipoylation via its role as an octanoyl/lipoyl carrier protein intermediate. The chain is Glycine cleavage system H protein from Staphylococcus carnosus (strain TM300).